The sequence spans 498 residues: ATP synthase subunit beta, chloroplastic (498 aa).

Phosphothreonine is present on threonine 6. The residue at position 13 (serine 13) is a Phosphoserine. ATP is bound at residue 172–179 (GGAGVGKT).

Belongs to the ATPase alpha/beta chains family. F-type ATPases have 2 components, CF(1) - the catalytic core - and CF(0) - the membrane proton channel. CF(1) has five subunits: alpha(3), beta(3), gamma(1), delta(1), epsilon(1). CF(0) has four main subunits: a(1), b(1), b'(1) and c(9-12).

The protein localises to the plastid. Its subcellular location is the chloroplast thylakoid membrane. It carries out the reaction ATP + H2O + 4 H(+)(in) = ADP + phosphate + 5 H(+)(out). In terms of biological role, produces ATP from ADP in the presence of a proton gradient across the membrane. The catalytic sites are hosted primarily by the beta subunits. The chain is ATP synthase subunit beta, chloroplastic from Draba nemorosa (Woodland whitlowgrass).